Consider the following 794-residue polypeptide: Protein argonaute-4 (794 aa).

The 120-residue stretch at 152 to 271 (PIIEFMCEVL…LPLEVCNIVA (120 aa)) folds into the PAZ domain. The 312-residue stretch at 442–753 (LIVVILPGKT…VAFRARYHLV (312 aa)) folds into the Piwi domain. The tract at residues 758-779 (DSAEGSHVSGQSNGRDPQALAK) is disordered.

The protein belongs to the argonaute family. Ago subfamily.

Its subcellular location is the cytoplasm. The protein resides in the P-body. In terms of biological role, required for RNA-mediated gene silencing (RNAi). Binds to short RNAs such as microRNAs (miRNAs) and represses the translation of mRNAs which are complementary to them. Lacks endonuclease activity and does not appear to cleave target mRNAs. This Gallus gallus (Chicken) protein is Protein argonaute-4 (AGO4).